A 264-amino-acid polypeptide reads, in one-letter code: Virulence plasmid protein pGP3-D (264 aa).

This Chlamydia psittaci (Chlamydophila psittaci) protein is Virulence plasmid protein pGP3-D.